Reading from the N-terminus, the 282-residue chain is ATP synthase gamma chain (282 aa).

Belongs to the ATPase gamma chain family. In terms of assembly, F-type ATPases have 2 components, CF(1) - the catalytic core - and CF(0) - the membrane proton channel. CF(1) has five subunits: alpha(3), beta(3), gamma(1), delta(1), epsilon(1). CF(0) has three main subunits: a, b and c.

It is found in the cell membrane. Produces ATP from ADP in the presence of a proton gradient across the membrane. The gamma chain is believed to be important in regulating ATPase activity and the flow of protons through the CF(0) complex. The sequence is that of ATP synthase gamma chain from Clostridium botulinum (strain Okra / Type B1).